The primary structure comprises 625 residues: Threonine--tRNA ligase (625 aa).

The interval 1-143 (MRILLIHSDY…ELSRTIIPEG (143 aa)) is editing domain. Positions 206–505 (PHVKLMLEHE…MQEGKKPMLP (300 aa)) are catalytic. Zn(2+) is bound by residues Cys298, His350, and His474.

It belongs to the class-II aminoacyl-tRNA synthetase family. Homodimer. The cofactor is Zn(2+).

The protein localises to the cytoplasm. The catalysed reaction is tRNA(Thr) + L-threonine + ATP = L-threonyl-tRNA(Thr) + AMP + diphosphate + H(+). In terms of biological role, catalyzes the attachment of threonine to tRNA(Thr) in a two-step reaction: L-threonine is first activated by ATP to form Thr-AMP and then transferred to the acceptor end of tRNA(Thr). Also edits incorrectly charged L-seryl-tRNA(Thr). This is Threonine--tRNA ligase from Pyrococcus horikoshii (strain ATCC 700860 / DSM 12428 / JCM 9974 / NBRC 100139 / OT-3).